We begin with the raw amino-acid sequence, 85 residues long: MGSVALILKVMPESPDVDLEALKAAMRAKVPSIQDIQEEPIGFGLKALKVMAVVSDQGGETDALEEALSSIEGVERAEIAELTLT.

Belongs to the EF-1-beta/EF-1-delta family.

In terms of biological role, promotes the exchange of GDP for GTP in EF-1-alpha/GDP, thus allowing the regeneration of EF-1-alpha/GTP that could then be used to form the ternary complex EF-1-alpha/GTP/AAtRNA. The polypeptide is Elongation factor 1-beta (Methanosphaerula palustris (strain ATCC BAA-1556 / DSM 19958 / E1-9c)).